Here is an 843-residue protein sequence, read N- to C-terminus: Tetratricopeptide repeat protein 7B (843 aa).

The stretch at 97–131 is one TPR 1 repeat; sequence QESNLIMAKLNYVEGDYKEALNIYARVGLDDLPLT. Phosphoserine is present on residues serine 160 and serine 202. 6 TPR repeats span residues 219–252, 363–396, 397–430, 479–514, 516–548, and 549–582; these read ETGL…VETR, SVVY…AFEE, FHLW…KPDD, TYSL…SPTD, QAAF…QGDD, and ANSL…YPEN. A phosphoserine mark is found at serine 625, serine 629, serine 630, serine 673, serine 677, serine 678, and serine 681. TPR repeat units follow at residues 696 to 729, 730 to 763, 765 to 797, and 798 to 831; these read AQIW…FPMS, HNVL…SPTH, KSMQ…NSTA, and HEVW…EASS.

As to quaternary structure, component of a phosphatidylinositol 4-kinase (PI4K) complex, composed of PI4KA, EFR3 (EFR3A or EFR3B), TTC7 (TTC7A or TTC7B) and HYCC (HYCC1 or HYCC2). Interacts with PI4KA, interaction is direct. Interacts with EFR3 (EFR3A or EFR3B), interaction is direct. Interacts with HYCC (HYCC1 or HYCC2), interaction is direct. Association with the PI4K complex is strongly reduced by TMEM150A.

It localises to the cytoplasm. The protein resides in the cytosol. Its subcellular location is the cell membrane. Its function is as follows. Component of a complex required to localize phosphatidylinositol 4-kinase (PI4K) to the plasma membrane. The complex acts as a regulator of phosphatidylinositol 4-phosphate (PtdIns(4)P) synthesis. In the complex, plays a central role in bridging PI4KA to EFR3B and HYCC1, via direct interactions. This chain is Tetratricopeptide repeat protein 7B (TTC7B), found in Homo sapiens (Human).